The primary structure comprises 161 residues: 2-C-methyl-D-erythritol 2,4-cyclodiphosphate synthase (161 aa).

A divalent metal cation-binding residues include Asp-10 and His-12. 4-CDP-2-C-methyl-D-erythritol 2-phosphate contacts are provided by residues 10–12 and 36–37; these read DVH and HS. A divalent metal cation is bound at residue His-44. Residues 58–60, 63–67, and Arg-144 contribute to the 4-CDP-2-C-methyl-D-erythritol 2-phosphate site; these read DIG and FSDTD.

It belongs to the IspF family. Homotrimer. A divalent metal cation is required as a cofactor.

It catalyses the reaction 4-CDP-2-C-methyl-D-erythritol 2-phosphate = 2-C-methyl-D-erythritol 2,4-cyclic diphosphate + CMP. Its pathway is isoprenoid biosynthesis; isopentenyl diphosphate biosynthesis via DXP pathway; isopentenyl diphosphate from 1-deoxy-D-xylulose 5-phosphate: step 4/6. Functionally, involved in the biosynthesis of isopentenyl diphosphate (IPP) and dimethylallyl diphosphate (DMAPP), two major building blocks of isoprenoid compounds. Catalyzes the conversion of 4-diphosphocytidyl-2-C-methyl-D-erythritol 2-phosphate (CDP-ME2P) to 2-C-methyl-D-erythritol 2,4-cyclodiphosphate (ME-CPP) with a corresponding release of cytidine 5-monophosphate (CMP). The sequence is that of 2-C-methyl-D-erythritol 2,4-cyclodiphosphate synthase from Burkholderia lata (strain ATCC 17760 / DSM 23089 / LMG 22485 / NCIMB 9086 / R18194 / 383).